A 53-amino-acid chain; its full sequence is uncharacterized protein (53 aa).

This is an uncharacterized protein from Dictyostelium discoideum (Social amoeba).